Reading from the N-terminus, the 552-residue chain is 5'-AMP-activated protein kinase catalytic subunit alpha-2 (552 aa).

The 253-residue stretch at 16–268 (YVLGDTLGVG…IKDIREHEWF (253 aa)) folds into the Protein kinase domain. ATP contacts are provided by residues 22–30 (LGVGTFGKV) and Lys45. The Proton acceptor role is filled by Asp139. At Thr172 the chain carries Phosphothreonine; by LKB1 and CaMKK2. Thr258 is subject to Phosphothreonine. The interval 291-376 (EAVKEVCEKF…PERMPPLIAD (86 aa)) is AIS. A Phosphoserine modification is found at Ser377. The tract at residues 478 to 519 (EQRSGSSTPQRSCSAAGLHRPRSSLDSVTAESHSLSGSLSGS) is disordered. The segment covering 480 to 490 (RSGSSTPQRSC) has biased composition (polar residues). Phosphoserine is present on Ser491. Residues 509-519 (SHSLSGSLSGS) show a composition bias toward low complexity.

This sequence belongs to the protein kinase superfamily. CAMK Ser/Thr protein kinase family. SNF1 subfamily. In terms of assembly, AMPK is a heterotrimer of an alpha catalytic subunit (PRKAA1 or PRKAA2), a beta (PRKAB1 or PRKAB2) and a gamma non-catalytic subunits (PRKAG1, PRKAG2 or PRKAG3). Interacts with FNIP1 and FNIP2. Interacts with DUSP29. Interacts with ARF6. The phosphorylated form at Thr-172 mediated by CamKK2 interacts with ACSS2. The cofactor is Mg(2+). Post-translationally, ubiquitinated. In terms of processing, phosphorylated at Thr-172 by STK11/LKB1 in complex with STE20-related adapter-alpha (STRADA) pseudo kinase and CAB39. Also phosphorylated at Thr-172 by CAMKK2; triggered by a rise in intracellular calcium ions, without detectable changes in the AMP/ATP ratio. CAMKK1 can also phosphorylate Thr-172, but at much lower level. Dephosphorylated by protein phosphatase 2A and 2C (PP2A and PP2C). Phosphorylated by ULK1; leading to negatively regulate AMPK activity and suggesting the existence of a regulatory feedback loop between ULK1 and AMPK. Dephosphorylated by PPM1A and PPM1B at Thr-172 (mediated by STK11/LKB1).

It is found in the cytoplasm. The protein localises to the nucleus. The catalysed reaction is L-seryl-[protein] + ATP = O-phospho-L-seryl-[protein] + ADP + H(+). It carries out the reaction L-threonyl-[protein] + ATP = O-phospho-L-threonyl-[protein] + ADP + H(+). The enzyme catalyses L-seryl-[acetyl-CoA carboxylase] + ATP = O-phospho-L-seryl-[acetyl-CoA carboxylase] + ADP + H(+). It catalyses the reaction L-seryl-[3-hydroxy-3-methylglutaryl-coenzyme A reductase] + ATP = O-phospho-L-seryl-[3-hydroxy-3-methylglutaryl-coenzyme A reductase] + ADP + H(+). Activated by phosphorylation on Thr-172. Binding of AMP to non-catalytic gamma subunit (PRKAG1, PRKAG2 or PRKAG3) results in allosteric activation, inducing phosphorylation on Thr-172. AMP-binding to gamma subunit also sustains activity by preventing dephosphorylation of Thr-172. ADP also stimulates Thr-172 phosphorylation, without stimulating already phosphorylated AMPK. ATP promotes dephosphorylation of Thr-172, rendering the enzyme inactive. Under physiological conditions AMPK mainly exists in its inactive form in complex with ATP, which is much more abundant than AMP. Selectively inhibited by compound C (6-[4-(2-Piperidin-1-yl-ethoxy)-phenyl)]-3-pyridin-4-yl-pyyrazolo[1,5-a] pyrimidine. Activated by resveratrol, a natural polyphenol present in red wine, and S17834, a synthetic polyphenol. Salicylate/aspirin directly activates kinase activity, primarily by inhibiting Thr-172 dephosphorylation. Functionally, catalytic subunit of AMP-activated protein kinase (AMPK), an energy sensor protein kinase that plays a key role in regulating cellular energy metabolism. In response to reduction of intracellular ATP levels, AMPK activates energy-producing pathways and inhibits energy-consuming processes: inhibits protein, carbohydrate and lipid biosynthesis, as well as cell growth and proliferation. AMPK acts via direct phosphorylation of metabolic enzymes, and by longer-term effects via phosphorylation of transcription regulators. Regulates lipid synthesis by phosphorylating and inactivating lipid metabolic enzymes such as ACACA, ACACB, GYS1, HMGCR and LIPE; regulates fatty acid and cholesterol synthesis by phosphorylating acetyl-CoA carboxylase (ACACA and ACACB) and hormone-sensitive lipase (LIPE) enzymes, respectively. Promotes lipolysis of lipid droplets by mediating phosphorylation of isoform 1 of CHKA (CHKalpha2). Regulates insulin-signaling and glycolysis by phosphorylating IRS1, PFKFB2 and PFKFB3. Involved in insulin receptor/INSR internalization. AMPK stimulates glucose uptake in muscle by increasing the translocation of the glucose transporter SLC2A4/GLUT4 to the plasma membrane, possibly by mediating phosphorylation of TBC1D4/AS160. Regulates transcription and chromatin structure by phosphorylating transcription regulators involved in energy metabolism such as CRTC2/TORC2, FOXO3, histone H2B, HDAC5, MEF2C, MLXIPL/ChREBP, EP300, HNF4A, p53/TP53, SREBF1, SREBF2 and PPARGC1A. Acts as a key regulator of glucose homeostasis in liver by phosphorylating CRTC2/TORC2, leading to CRTC2/TORC2 sequestration in the cytoplasm. In response to stress, phosphorylates 'Ser-36' of histone H2B (H2BS36ph), leading to promote transcription. Acts as a key regulator of cell growth and proliferation by phosphorylating FNIP1, TSC2, RPTOR, WDR24 and ATG1/ULK1: in response to nutrient limitation, negatively regulates the mTORC1 complex by phosphorylating RPTOR component of the mTORC1 complex and by phosphorylating and activating TSC2. Also phosphorylates and inhibits GATOR2 subunit WDR24 in response to nutrient limitation, leading to suppress glucose-mediated mTORC1 activation. In response to energetic stress, phosphorylates FNIP1, inactivating the non-canonical mTORC1 signaling, thereby promoting nuclear translocation of TFEB and TFE3, and inducing transcription of lysosomal or autophagy genes. In response to nutrient limitation, promotes autophagy by phosphorylating and activating ATG1/ULK1. In that process also activates WDR45/WIPI4. Phosphorylates CASP6, thereby preventing its autoprocessing and subsequent activation. AMPK also acts as a regulator of circadian rhythm by mediating phosphorylation of CRY1, leading to destabilize it. May regulate the Wnt signaling pathway by phosphorylating CTNNB1, leading to stabilize it. Also acts as a regulator of cellular polarity by remodeling the actin cytoskeleton; probably by indirectly activating myosin. Also phosphorylates CFTR, EEF2K, KLC1, NOS3 and SLC12A1. Plays an important role in the differential regulation of pro-autophagy (composed of PIK3C3, BECN1, PIK3R4 and UVRAG or ATG14) and non-autophagy (composed of PIK3C3, BECN1 and PIK3R4) complexes, in response to glucose starvation. Can inhibit the non-autophagy complex by phosphorylating PIK3C3 and can activate the pro-autophagy complex by phosphorylating BECN1. Upon glucose starvation, promotes ARF6 activation in a kinase-independent manner leading to cell migration. Upon glucose deprivation mediates the phosphorylation of ACSS2 at 'Ser-659', which exposes the nuclear localization signal of ACSS2, required for its interaction with KPNA1 and nuclear translocation. Upon stress, regulates mitochondrial fragmentation through phosphorylation of MTFR1L. The chain is 5'-AMP-activated protein kinase catalytic subunit alpha-2 (PRKAA2) from Sus scrofa (Pig).